Here is a 237-residue protein sequence, read N- to C-terminus: Glutathione S-transferase L1 (237 aa).

One can recognise a GST N-terminal domain in the interval 29-110; the sequence is GTTRLYISYT…YVDSNFDGPS (82 aa). Glutathione contacts are provided by residues 39 to 40, 67 to 68, 81 to 82, and 94 to 95; these read CP, NR, KV, and ES. Residues 112 to 232 form the GST C-terminal domain; the sequence is YPEDSAKREF…KTDSEYVVNY (121 aa).

The protein belongs to the GST superfamily. Lambda family.

The protein resides in the cytoplasm. The protein localises to the cytosol. It carries out the reaction RX + glutathione = an S-substituted glutathione + a halide anion + H(+). Functionally, catalyzes the glutathione-dependent reduction of S-glutathionylquercetin to quercetin. In vitro, possesses glutathione-dependent thiol transferase activity toward 2-hydroxyethyl disulfide (HED). This Arabidopsis thaliana (Mouse-ear cress) protein is Glutathione S-transferase L1 (GSTL1).